The chain runs to 619 residues: Vitamin B12 transporter BtuB (619 aa).

The first 25 residues, 1 to 25, serve as a signal peptide directing secretion; it reads MINKKRLLLSTVSIMVISGWNQASA. The TonB box signature appears at 31–38; it reads DSLVVTAS. Residues 43-157 enclose the TBDR plug domain; that stretch reads PISSILAPYT…IGGVINIITT (115 aa). Cyanocob(III)alamin-binding positions include leucine 88, serine 90, and 115-116; that span reads IS. A TBDR beta-barrel domain is found at 160–619; that stretch reads KLGTSLNVGI…EYYLTGSYNF (460 aa). 3 consecutive transmembrane segments (beta stranded) span residues 163–170, 174–183, and 189–200; these read TSLNVGIG, YQTYDGATQQ, and TVLTAAANYTYT. Ca(2+)-binding residues include aspartate 204, glutamine 216, aspartate 218, and aspartate 220. The next 2 beta stranded transmembrane spans lie at 222–232 and 237–253; these read FMSKMLWLGVD and EQVS…NRTS. Residues tyrosine 254 and aspartate 255 each contribute to the Ca(2+) site. Residue alanine 256 participates in cyanocob(III)alamin binding. Residue aspartate 268 coordinates Ca(2+). The next 17 beta stranded transmembrane spans lie at 270 to 284, 286 to 303, 316 to 332, 335 to 344, 360 to 376, 378 to 388, 392 to 407, 410 to 424, 441 to 450, 456 to 465, 478 to 495, 499 to 514, 522 to 534, 540 to 556, 563 to 577, 590 to 601, and 607 to 619; these read RELY…VRFN, GIYS…KDYN, SLND…NTFQ, QGIVSTGVDF, KTVR…QQLK, FILEGAIRSDK, AGWN…WEFI, YRLI…KAPT, ESKQWEGGIE, LTWRMTVYRN, YYNI…TGLI, MFQH…PRNS, RRAK…QLDW, DWGL…DKDF, RVKL…LTVS, IANLLDKDYETV, and PGRE…SYNF. Serine 316 is a binding site for cyanocob(III)alamin. Arginine 522 lines the cyanocob(III)alamin pocket. A TonB C-terminal box motif is present at residues 602-619; that stretch reads YGYRIPGREYYLTGSYNF.

This sequence belongs to the TonB-dependent receptor family. BtuB (TC 1.B.14.3.1) subfamily.

Its subcellular location is the cell outer membrane. Functionally, involved in the active translocation of vitamin B12 (cyanocobalamin) across the outer membrane to the periplasmic space. It derives its energy for transport by interacting with the trans-periplasmic membrane protein TonB. This chain is Vitamin B12 transporter BtuB, found in Photorhabdus laumondii subsp. laumondii (strain DSM 15139 / CIP 105565 / TT01) (Photorhabdus luminescens subsp. laumondii).